An 85-amino-acid polypeptide reads, in one-letter code: Small ribosomal subunit protein uS17 (85 aa).

Belongs to the universal ribosomal protein uS17 family. Part of the 30S ribosomal subunit.

One of the primary rRNA binding proteins, it binds specifically to the 5'-end of 16S ribosomal RNA. The sequence is that of Small ribosomal subunit protein uS17 from Acetivibrio thermocellus (strain ATCC 27405 / DSM 1237 / JCM 9322 / NBRC 103400 / NCIMB 10682 / NRRL B-4536 / VPI 7372) (Clostridium thermocellum).